A 55-amino-acid polypeptide reads, in one-letter code: ATP synthase protein 8 (55 aa).

The helical transmembrane segment at 11-31 (LIMFSVTLMLLIVLVINHFML) threads the bilayer.

This sequence belongs to the ATPase protein 8 family. As to quaternary structure, F-type ATPases have 2 components, CF(1) - the catalytic core - and CF(0) - the membrane proton channel.

The protein localises to the mitochondrion membrane. Mitochondrial membrane ATP synthase (F(1)F(0) ATP synthase or Complex V) produces ATP from ADP in the presence of a proton gradient across the membrane which is generated by electron transport complexes of the respiratory chain. F-type ATPases consist of two structural domains, F(1) - containing the extramembraneous catalytic core and F(0) - containing the membrane proton channel, linked together by a central stalk and a peripheral stalk. During catalysis, ATP synthesis in the catalytic domain of F(1) is coupled via a rotary mechanism of the central stalk subunits to proton translocation. Part of the complex F(0) domain. Minor subunit located with subunit a in the membrane. The chain is ATP synthase protein 8 (MT-ATP8) from Albinaria caerulea (Land snail).